Here is a 1733-residue protein sequence, read N- to C-terminus: Probable nuclear antigen (1733 aa).

Disordered regions lie at residues 1 to 41 (MNLF…THFT), 71 to 394 (PHPP…EQQV), 437 to 506 (AGAG…EGAQ), 520 to 548 (APAA…EGGA), 882 to 907 (LGGG…GAAL), 993 to 1141 (AGGP…EDAA), 1223 to 1242 (PERV…RGHA), 1348 to 1475 (GAGP…GRAG), 1585 to 1608 (SGGG…WGSG), and 1630 to 1665 (PRRR…RGGC). Over residues 21-31 (DHHHQQHHHHP) the composition is skewed to basic residues. Positions 77–97 (PQDHHRPTPARDHRDPRDHLP) are enriched in basic and acidic residues. Low complexity predominate over residues 113–131 (TTTTTIKDPQHPQDPLLLP). Positions 135 to 147 (LQEEDPHLLRPTR) are enriched in basic and acidic residues. Residues 179–189 (GGGPPSPPPRP) show a composition bias toward pro residues. Residues 190–201 (STSSSSSHQGPP) show a composition bias toward low complexity. Pro residues predominate over residues 202-220 (STRPPPPQRPPPRWPPPSP). The segment covering 227–240 (RAGSENTAQTLFSH) has biased composition (polar residues). Positions 272–299 (PPPSPPPRPPPPLPPPPPPPPPPQPPPA) are enriched in pro residues. Residues 316-326 (GGRRRGGKRRR) are compositionally biased toward basic residues. The segment covering 336–354 (DAEEEEDGDGDEDEDEDRA) has biased composition (acidic residues). The segment covering 355–364 (EGEGREDGGE) has biased composition (basic and acidic residues). Composition is skewed to gly residues over residues 365-374 (GPRGAGGGAG), 454-466 (GAPG…GLEG), and 479-494 (GGDG…GLGV). Low complexity predominate over residues 495–506 (GLQQRRGAEGAQ). A compositionally biased stretch (gly residues) spans 882 to 892 (LGGGGGGGQQR). Low complexity predominate over residues 893 to 907 (GSGVRSGPESEGAAL). Composition is skewed to gly residues over residues 993-1004 (AGGPGAGEAGGG) and 1027-1043 (AGRG…LGEP). Composition is skewed to basic and acidic residues over residues 1078 to 1087 (GAGDEGDRVR) and 1100 to 1112 (RVAE…RHLL). Over residues 1116 to 1127 (GPEGGRGAGGRG) the composition is skewed to gly residues. Residues 1385–1407 (GPGGLRGRGRGGRGGGGGGGGRG) are compositionally biased toward gly residues. Basic residues-rich tracts occupy residues 1408-1420 (PRGR…RRWR) and 1444-1453 (RGGRGGRGGR). Residues 1454-1474 (GRGGGRAPRGGGGGPGGGGRA) show a composition bias toward gly residues. Residues 1652 to 1665 (RGAGRAGGGGRGGC) are compositionally biased toward gly residues.

The sequence is that of Probable nuclear antigen from Sus scrofa (Pig).